Consider the following 198-residue polypeptide: HTH-type transcriptional regulator BetI (198 aa).

In terms of domain architecture, HTH tetR-type spans 8–68 (PLRRRELIDA…ATMRHLLREL (61 aa)). Positions 31-50 (TVAQIAHEAGVSPALAHHYF) form a DNA-binding region, H-T-H motif.

It functions in the pathway amine and polyamine biosynthesis; betaine biosynthesis via choline pathway [regulation]. Repressor involved in the biosynthesis of the osmoprotectant glycine betaine. It represses transcription of the choline transporter BetT and the genes of BetAB involved in the synthesis of glycine betaine. In Brucella abortus (strain 2308), this protein is HTH-type transcriptional regulator BetI.